The primary structure comprises 293 residues: Methylsterol monooxygenase 1 (293 aa).

A run of 2 helical transmembrane segments spans residues 55–75 (LIVH…FQFI) and 100–120 (VLLF…YYFT). The 130-residue stretch at 145-274 (CAVIEDTWHY…FTWWDRIFGT (130 aa)) folds into the Fatty acid hydroxylase domain. The Histidine box-1 motif lies at 157 to 161 (HRLLH). The Histidine box-2 motif lies at 170-174 (HKVHH). The helical transmembrane segment at 199 to 219 (FFIGIVLLCDHVILLWAWVTI) threads the bilayer. The Histidine box-3 motif lies at 249-255 (HHDFHHM).

This sequence belongs to the sterol desaturase family. The cofactor is Fe cation. In terms of processing, ubiquitinated by MARCHF6, leading to proteasomal degradation.

The protein localises to the endoplasmic reticulum membrane. The catalysed reaction is 4,4-dimethyl-5alpha-cholest-7-en-3beta-ol + 6 Fe(II)-[cytochrome b5] + 3 O2 + 5 H(+) = 4alpha-carboxy-4beta-methyl-5alpha-cholest-7-ene-3beta-ol + 6 Fe(III)-[cytochrome b5] + 4 H2O. It catalyses the reaction 4,4-dimethyl-5alpha-cholesta-8,24-dien-3beta-ol + 6 Fe(II)-[cytochrome b5] + 3 O2 + 5 H(+) = 4beta-methylzymosterol-4alpha-carboxylate + 6 Fe(III)-[cytochrome b5] + 4 H2O. The enzyme catalyses 4alpha-methylzymosterol + 6 Fe(II)-[cytochrome b5] + 3 O2 + 5 H(+) = 4alpha-carboxyzymosterol + 6 Fe(III)-[cytochrome b5] + 4 H2O. It carries out the reaction 4alpha-methyl-5alpha-cholest-7-en-3beta-ol + 6 Fe(II)-[cytochrome b5] + 3 O2 + 5 H(+) = 4alpha-carboxy-5alpha-cholest-7-en-3beta-ol + 6 Fe(III)-[cytochrome b5] + 4 H2O. The catalysed reaction is 4,4-dimethyl-5alpha-cholest-8-en-3beta-ol + 6 Fe(II)-[cytochrome b5] + 3 O2 + 5 H(+) = 4alpha-carboxy-4beta-methyl-5alpha-cholest-8-en-3beta-ol + 6 Fe(III)-[cytochrome b5] + 4 H2O. It catalyses the reaction 4alpha-methyl-5alpha-cholest-8-en-3beta-ol + 6 Fe(II)-[cytochrome b5] + 3 O2 + 5 H(+) = 4alpha-carboxy-5alpha-cholest-8-ene-3beta-ol + 6 Fe(III)-[cytochrome b5] + 4 H2O. It participates in steroid biosynthesis; zymosterol biosynthesis; zymosterol from lanosterol: step 3/6. Its pathway is steroid biosynthesis; cholesterol biosynthesis. Catalyzes the three-step monooxygenation required for the demethylation of 4,4-dimethyl and 4alpha-methylsterols, which can be subsequently metabolized to cholesterol. In Pongo abelii (Sumatran orangutan), this protein is Methylsterol monooxygenase 1 (MSMO1).